The sequence spans 224 residues: Viral late gene transcription factor 3 (224 aa).

The segment at 6 to 26 (CSGCRHNGIVSEQGYEYCIFC) is a zinc-finger region.

Belongs to the orthopoxvirus VLTF-3/OPG127 family. In terms of assembly, interacts with the late transcription elongation factor VLTF-4/OPG110. Interacts with the late transcription factors VLTF-1/OPG093.

Functionally, acts with RNA polymerase to initiate transcription from late gene promoters. In Vaccinia virus (strain Ankara) (VACV), this protein is Viral late gene transcription factor 3 (OPG127).